The primary structure comprises 120 residues: NAD(P)H-quinone oxidoreductase subunit 3, chloroplastic (120 aa).

Helical transmembrane passes span 7–27 (YQTF…ALLI), 64–84 (SFAL…PWAM), and 89–109 (LGIF…IGLV).

The protein belongs to the complex I subunit 3 family. In terms of assembly, NDH is composed of at least 16 different subunits, 5 of which are encoded in the nucleus.

The protein localises to the plastid. The protein resides in the chloroplast thylakoid membrane. It carries out the reaction a plastoquinone + NADH + (n+1) H(+)(in) = a plastoquinol + NAD(+) + n H(+)(out). The enzyme catalyses a plastoquinone + NADPH + (n+1) H(+)(in) = a plastoquinol + NADP(+) + n H(+)(out). Its function is as follows. NDH shuttles electrons from NAD(P)H:plastoquinone, via FMN and iron-sulfur (Fe-S) centers, to quinones in the photosynthetic chain and possibly in a chloroplast respiratory chain. The immediate electron acceptor for the enzyme in this species is believed to be plastoquinone. Couples the redox reaction to proton translocation, and thus conserves the redox energy in a proton gradient. This Psilotum nudum (Whisk fern) protein is NAD(P)H-quinone oxidoreductase subunit 3, chloroplastic.